The chain runs to 899 residues: MLSTLIRKVIGSKNERELKRLWPIVAKINSLEPQMQALSDEELRGKTAEFKERYSKGESLDALLPEAFAVCREGGRRELGMRHFDVQLIGGMTLHAGKIAEMKTGEGKTLVATLAAYLNAISGKGVHVVTVNDYLARRDSEWMGRLYGFLGLTTGVIVHGLDDEQRRANYAADITYGTNNEFGFDYLRDNMKFSLDDYVQRGFNFAVVDEVDSILIDEARTPLIISGPTEESTDKYYVINQIIPRLEQGEVKEVEANTLSGKKKVYTGDFTIDEKAKSATLTEQGVSKVEKLLKIENLYDPRNIETLHHVNQALRAHAMYRRDVDYVVKDGEVLIVDEFTGRLMPGRRWSDGLHQAVEAKEGVRIESENQTLATITFQNYFRMYAKLSGMTGTADTEAEEFHKIYKLDVTVIPTNRPLLRPDYPDVIYKTEQEKFAAVISDIKEHYEKGQPCLVGTISIEKSEVLSELLRKQGIPHFVLNAKQHEKEAEIVAQAGRKKAITIATNMAGRGTDIVLGGNPDSLLKQWRLANPEATAEQAAAMLEQYRQQCAAEHDEVVALGGLHIIGTERHESRRIDNQLRGRSGRQGDPGSSRFYLSLQDDLLRIFGSERVAKIMDFLKIEEGEAITHAMINKSIENAQKKVEAHNFEIRKHLIDYDDVMNKQREVIYTQRREILAGEDIRESFLEMLDDTISDIVKAYAFEKDAPLEWDWESLSETVFRCFSIQLELSREMIARLNADGLQKMLQEQAHESIKRRADELGDELMDHLIRVVMLQAIDVHWKDHLLNIDHLKEGIGLRSYGQKDPKQEYKKEAYQLFMEMIIRIREETVEKVFWVQIEKEEDIEELEEEQVERSRKMFKAITVNDDEHPAEPAKSQKNAGRNEPCPCGSGKKYKKCCGK.

ATP-binding positions include glutamine 87, 105-109, and aspartate 512; that span reads GEGKT. Disordered stretches follow at residues 573–592 and 861–899; these read RRID…PGSS and ITVN…CCGK. The Zn(2+) site is built by cysteine 885, cysteine 887, cysteine 896, and cysteine 897.

The protein belongs to the SecA family. In terms of assembly, monomer and homodimer. Part of the essential Sec protein translocation apparatus which comprises SecA, SecYEG and auxiliary proteins SecDF-YajC and YidC. Requires Zn(2+) as cofactor.

It is found in the cell inner membrane. It localises to the cytoplasm. The catalysed reaction is ATP + H2O + cellular proteinSide 1 = ADP + phosphate + cellular proteinSide 2.. In terms of biological role, part of the Sec protein translocase complex. Interacts with the SecYEG preprotein conducting channel. Has a central role in coupling the hydrolysis of ATP to the transfer of proteins into and across the cell membrane, serving as an ATP-driven molecular motor driving the stepwise translocation of polypeptide chains across the membrane. This is Protein translocase subunit SecA from Trichlorobacter lovleyi (strain ATCC BAA-1151 / DSM 17278 / SZ) (Geobacter lovleyi).